A 987-amino-acid polypeptide reads, in one-letter code: Ephrin type-B receptor 4a (987 aa).

The N-terminal stretch at M1–A24 is a signal peptide. The Extracellular segment spans residues E25–G548. Residues E26–R205 form the Eph LBD domain. 2 cysteine pairs are disulfide-bonded: C70–C187 and C104–C114. Residues D319–N340 form a disordered region. Pro residues predominate over residues T326–P335. 2 Fibronectin type-III domains span residues P328–N438 and L442–D536. A helical membrane pass occupies residues I549 to I569. Topologically, residues R570 to Y987 are cytoplasmic. One can recognise a Protein kinase domain in the interval V621 to I884. ATP contacts are provided by residues I627–V635 and K653. The Proton acceptor role is filled by D746. An SAM domain is found at S914–Q978.

This sequence belongs to the protein kinase superfamily. Tyr protein kinase family. Ephrin receptor subfamily.

Its subcellular location is the cell membrane. The catalysed reaction is L-tyrosyl-[protein] + ATP = O-phospho-L-tyrosyl-[protein] + ADP + H(+). Receptor tyrosine kinase which binds promiscuously transmembrane ephrin-B family ligands residing on adjacent cells, leading to contact-dependent bidirectional signaling into neighboring cells. The signaling pathway downstream of the receptor is referred to as forward signaling while the signaling pathway downstream of the ephrin ligand is referred to as reverse signaling. Together with its cognate ligand/functional ligand EFNB2 is involved in the regulation of cell adhesion and cell migration, and plays a central role in heart morphogenesis, angiogenesis and blood vessel remodeling and permeability. EPHB4-mediated forward signaling controls cellular repulsion and segregation from EFNB2-expressing cells. Involved in somitogenesis. The chain is Ephrin type-B receptor 4a from Danio rerio (Zebrafish).